The sequence spans 361 residues: Peptide chain release factor 1 (361 aa).

The residue at position 235 (Gln-235) is an N5-methylglutamine. Positions 283–306 are disordered; that stretch reads RSQQATAEAMTRKLQVGSGDRSQR.

The protein belongs to the prokaryotic/mitochondrial release factor family. Post-translationally, methylated by PrmC. Methylation increases the termination efficiency of RF1.

It is found in the cytoplasm. In terms of biological role, peptide chain release factor 1 directs the termination of translation in response to the peptide chain termination codons UAG and UAA. The protein is Peptide chain release factor 1 of Xylella fastidiosa (strain M23).